Reading from the N-terminus, the 295-residue chain is Ectoine dioxygenase (295 aa).

Gln-129 lines the L-ectoine pocket. Lys-135 contributes to the 2-oxoglutarate binding site. Fe cation contacts are provided by His-146, Asp-148, and His-247.

Belongs to the PhyH family. EctD subfamily. In terms of assembly, homodimer. Requires Fe(2+) as cofactor.

It catalyses the reaction L-ectoine + 2-oxoglutarate + O2 = 5-hydroxyectoine + succinate + CO2. Involved in the biosynthesis of 5-hydroxyectoine, called compatible solute, which helps organisms to survive extreme osmotic stress by acting as a highly soluble organic osmolyte. Catalyzes the 2-oxoglutarate-dependent selective hydroxylation of L-ectoine to yield (4S,5S)-5-hydroxyectoine. This Streptomyces avermitilis (strain ATCC 31267 / DSM 46492 / JCM 5070 / NBRC 14893 / NCIMB 12804 / NRRL 8165 / MA-4680) protein is Ectoine dioxygenase.